The chain runs to 350 residues: RNA 3'-terminal phosphate cyclase (350 aa).

ATP is bound by residues glutamine 107 and 290 to 294 (FLGDQ). The active-site Tele-AMP-histidine intermediate is histidine 316.

The protein belongs to the RNA 3'-terminal cyclase family. Type 1 subfamily.

The protein localises to the cytoplasm. It catalyses the reaction a 3'-end 3'-phospho-ribonucleotide-RNA + ATP = a 3'-end 2',3'-cyclophospho-ribonucleotide-RNA + AMP + diphosphate. Catalyzes the conversion of 3'-phosphate to a 2',3'-cyclic phosphodiester at the end of RNA. The mechanism of action of the enzyme occurs in 3 steps: (A) adenylation of the enzyme by ATP; (B) transfer of adenylate to an RNA-N3'P to produce RNA-N3'PP5'A; (C) and attack of the adjacent 2'-hydroxyl on the 3'-phosphorus in the diester linkage to produce the cyclic end product. The biological role of this enzyme is unknown but it is likely to function in some aspects of cellular RNA processing. This is RNA 3'-terminal phosphate cyclase from Gloeothece citriformis (strain PCC 7424) (Cyanothece sp. (strain PCC 7424)).